A 997-amino-acid polypeptide reads, in one-letter code: P3N-PIPO polyprotein (997 aa).

The 141-residue stretch at 173–313 (IVCVDDVNNL…VLFYSDVEHY (141 aa)) folds into the Peptidase S30 domain. Catalysis depends on for P1 proteinase activity residues E235 and S267. Residues 365 to 368 (KLSC) carry the Involved in interaction with stylet and aphid transmission motif. The Involved in virions binding and aphid transmission motif lies at 621–623 (PTK). The region spanning 647–769 (MYIAKEGYCY…QSEMKHYRVG (123 aa)) is the Peptidase C6 domain. Catalysis depends on for helper component proteinase activity residues C655 and H728.

Belongs to the potyviridae P3N-PIPO polyprotein family. Interacts (via PIPO domain) with host PCaP1 protein; this interaction may help to anchor the movement complex to the plasma membrane from which the complex could move to the plasmodesmata. Potyviral RNA is expressed as two polyproteins which undergo post-translational proteolytic processing. Genome polyprotein is processed by NIa-pro, P1 and HC-pro proteinases resulting in the production of at least ten individual proteins. P3N-PIPO is cleaved by P1 and HC-pro proteinases resulting in the production of three individual proteins. The P1 proteinase and the HC-pro cleave only their respective C-termini autocatalytically.

The protein localises to the host cell junction. It is found in the host plasmodesma. It catalyses the reaction Hydrolyzes a Gly-|-Gly bond at its own C-terminus, commonly in the sequence -Tyr-Xaa-Val-Gly-|-Gly, in the processing of the potyviral polyprotein.. Functionally, required for aphid transmission and also has proteolytic activity. Only cleaves a Gly-Gly dipeptide at its own C-terminus. Interacts with virions and aphid stylets. Acts as a suppressor of RNA-mediated gene silencing, also known as post-transcriptional gene silencing (PTGS), a mechanism of plant viral defense that limits the accumulation of viral RNAs. May have RNA-binding activity. Allows efficient cell to cell propagation, by bypassing the host cell wall barrier. Transports viral genome to neighboring plant cells directly through plasmosdesmata, without any budding. The chain is P3N-PIPO polyprotein from Citrullus lanatus (Watermelon).